Reading from the N-terminus, the 402-residue chain is Glutamate N-acetyltransferase (402 aa).

The substrate site is built by threonine 146, lysine 172, threonine 185, glutamate 267, asparagine 397, and threonine 402. Threonine 185 serves as the catalytic Nucleophile.

It belongs to the ArgJ family. As to quaternary structure, heterotetramer of two alpha and two beta chains.

The protein resides in the cytoplasm. It catalyses the reaction N(2)-acetyl-L-ornithine + L-glutamate = N-acetyl-L-glutamate + L-ornithine. The protein operates within amino-acid biosynthesis; L-arginine biosynthesis; L-ornithine and N-acetyl-L-glutamate from L-glutamate and N(2)-acetyl-L-ornithine (cyclic): step 1/1. Its activity is regulated as follows. Competitively inhibited by L-ornithine. Its function is as follows. Catalyzes the transfer of the acetyl group from N(2)-acetylornithine to glutamate, forming N-acetylglutamate and L-ornithine. The polypeptide is Glutamate N-acetyltransferase (Methanocaldococcus jannaschii (strain ATCC 43067 / DSM 2661 / JAL-1 / JCM 10045 / NBRC 100440) (Methanococcus jannaschii)).